A 777-amino-acid polypeptide reads, in one-letter code: Beta-hexosaminidase (777 aa).

An N-terminal signal peptide occupies residues 1–18 (MKRLTFGACICCLLSLMA). Residue Cys19 is the site of N-palmitoyl cysteine attachment. The S-diacylglycerol cysteine moiety is linked to residue Cys19. Residues 625–766 (APKPGLTIRT…VMIRLKGEEK (142 aa)) enclose the PA14 domain.

It belongs to the glycosyl hydrolase 20 family.

The protein localises to the cell outer membrane. It carries out the reaction Hydrolysis of terminal non-reducing N-acetyl-D-hexosamine residues in N-acetyl-beta-D-hexosaminides.. The sequence is that of Beta-hexosaminidase (nahA) from Porphyromonas gingivalis (strain ATCC BAA-308 / W83).